Here is a 442-residue protein sequence, read N- to C-terminus: UDP-glycosyltransferase 78D4 (442 aa).

UDP-alpha-D-glucose is bound by residues 322-324 (APQ), 339-347 (HGGWNSVLE), and 361-364 (FGDH).

It belongs to the UDP-glycosyltransferase family.

The polypeptide is UDP-glycosyltransferase 78D4 (UGT78D4) (Arabidopsis thaliana (Mouse-ear cress)).